The chain runs to 280 residues: uncharacterized protein (280 aa).

The next 7 membrane-spanning stretches (helical) occupy residues 6 to 26 (YLVIILIIAGVISVLAFTPLV), 38 to 58 (VLAIVLFVYVFFGRQIIYLFP), 79 to 99 (IFLLDLCPFFAVIAPVFVFLK), 105 to 125 (GVLAVFGLFGALVTLFGELIF), 144 to 164 (NQIYFMMHFLSLLVSLAIILW), 171 to 191 (ISFFYIHVFALIYFSYVALMV), and 231 to 251 (LVFIVGFSLSYVAILLMTLFA).

The protein localises to the cell membrane. This is an uncharacterized protein from Mycoplasma genitalium (strain ATCC 33530 / DSM 19775 / NCTC 10195 / G37) (Mycoplasmoides genitalium).